A 497-amino-acid chain; its full sequence is Carboxylesterase (497 aa).

Serine 185 serves as the catalytic Acyl-ester intermediate. Residues glutamate 319 and histidine 415 each act as charge relay system in the active site.

This sequence belongs to the type-B carboxylesterase/lipase family.

It is found in the secreted. It carries out the reaction a carboxylic ester + H2O = an alcohol + a carboxylate + H(+). The chain is Carboxylesterase from Thermobifida fusca (Thermomonospora fusca).